We begin with the raw amino-acid sequence, 274 residues long: 4-deoxy-L-threo-5-hexosulose-uronate ketol-isomerase (274 aa).

Zn(2+) contacts are provided by histidine 192, histidine 194, glutamate 199, and histidine 241.

It belongs to the KduI family. Requires Zn(2+) as cofactor.

It carries out the reaction 5-dehydro-4-deoxy-D-glucuronate = 3-deoxy-D-glycero-2,5-hexodiulosonate. It participates in glycan metabolism; pectin degradation; 2-dehydro-3-deoxy-D-gluconate from pectin: step 4/5. Its function is as follows. Catalyzes the isomerization of 5-dehydro-4-deoxy-D-glucuronate to 3-deoxy-D-glycero-2,5-hexodiulosonate. This Shigella boydii serotype 18 (strain CDC 3083-94 / BS512) protein is 4-deoxy-L-threo-5-hexosulose-uronate ketol-isomerase.